The following is a 709-amino-acid chain: Polyribonucleotide nucleotidyltransferase (709 aa).

Residues D487 and D493 each coordinate Mg(2+). The KH domain maps to 554–613; the sequence is PRIHTMKISSDKIKDVIGKGGAVIRALCEETGTTIEIEDDGTIKIAATEGAAAKEAIRRI. The region spanning 623 to 691 is the S1 motif domain; that stretch reads GKIYTGKVMR…RQGRIRLSIK (69 aa).

The protein belongs to the polyribonucleotide nucleotidyltransferase family. In terms of assembly, component of the RNA degradosome, which is a multiprotein complex involved in RNA processing and mRNA degradation. It depends on Mg(2+) as a cofactor.

The protein resides in the cytoplasm. It carries out the reaction RNA(n+1) + phosphate = RNA(n) + a ribonucleoside 5'-diphosphate. Functionally, involved in mRNA degradation. Catalyzes the phosphorolysis of single-stranded polyribonucleotides processively in the 3'- to 5'-direction. The polypeptide is Polyribonucleotide nucleotidyltransferase (Aliivibrio fischeri (strain MJ11) (Vibrio fischeri)).